The chain runs to 144 residues: Large ribosomal subunit protein uL15 (144 aa).

The segment at 1 to 49 is disordered; sequence MRLNTLSPAAGAKSAAKRVGRGIGSGTGKTCGRGHKGQKSRSGGGVRVG. Residues 21–31 are compositionally biased toward gly residues; it reads RGIGSGTGKTC.

Belongs to the universal ribosomal protein uL15 family. As to quaternary structure, part of the 50S ribosomal subunit.

Functionally, binds to the 23S rRNA. This Shewanella sediminis (strain HAW-EB3) protein is Large ribosomal subunit protein uL15.